The chain runs to 183 residues: Caltractin ICL1c (183 aa).

Residues 1–30 are disordered; that stretch reads MARRGQQPPPQQQQAPPTQKNQAGKFNPAE. EF-hand domains lie at 39–74, 75–110, 112–147, and 148–183; these read EEVL…LGFE, AKNQ…RISE, DSKA…LGET, and MDDS…KTFA. 10 residues coordinate Ca(2+): Asp-52, Asp-54, Thr-56, Ser-58, Glu-63, Asp-88, Asp-90, Ser-92, Gln-94, and Glu-99.

Belongs to the centrin family. Monomer.

It is found in the cytoplasm. The protein localises to the cytoskeleton. Plays a fundamental role in microtubule organizing center structure and function. Component of the infraciliary lattice (ICL) and the ciliary basal bodies. This Paramecium tetraurelia protein is Caltractin ICL1c (Icl1c).